The sequence spans 318 residues: Peroxisomal targeting signal 2 receptor (318 aa).

WD repeat units lie at residues Asp60–Asp91, Glu104–Asp136, Gly148–Asp179, Ala191–Asp222, Gly235–Asn266, and His279–Asp310.

This sequence belongs to the WD repeat peroxin-7 family. In terms of assembly, interacts with PEX5; interaction only takes place when PEX7 is associated with cargo proteins. Interacts with VWA8.

It localises to the cytoplasm. The protein resides in the cytosol. It is found in the peroxisome matrix. Receptor required for the peroxisomal import of proteins containing a C-terminal PTS2-type peroxisomal targeting signal. Specifically binds to cargo proteins containing a PTS2 peroxisomal targeting signal in the cytosol. Cargo protein-binding triggers interaction with PEX5 and formation of a ternary complex composed of PEX5 and PEX7 along with PTS2-containing cargo proteins, which is tranlocated into peroxisomes by passing through the PEX13-PEX14 docking complex. The protein is Peroxisomal targeting signal 2 receptor of Mus musculus (Mouse).